The sequence spans 875 residues: Valine--tRNA ligase (875 aa).

Positions 44–54 match the 'HIGH' region motif; sequence PNVTGKLHLGH. The 'KMSKS' region signature appears at 520 to 524; it reads KMSKS. Residue Lys523 coordinates ATP. The stretch at 804–875 forms a coiled coil; that stretch reads LEGLINIEEE…VRARLAQLKQ (72 aa).

Belongs to the class-I aminoacyl-tRNA synthetase family. ValS type 1 subfamily. In terms of assembly, monomer.

It is found in the cytoplasm. The enzyme catalyses tRNA(Val) + L-valine + ATP = L-valyl-tRNA(Val) + AMP + diphosphate. Its function is as follows. Catalyzes the attachment of valine to tRNA(Val). As ValRS can inadvertently accommodate and process structurally similar amino acids such as threonine, to avoid such errors, it has a 'posttransfer' editing activity that hydrolyzes mischarged Thr-tRNA(Val) in a tRNA-dependent manner. The chain is Valine--tRNA ligase from Anoxybacillus flavithermus (strain DSM 21510 / WK1).